The chain runs to 314 residues: Lysophospholipase D GDPD1 (314 aa).

Over Met-1–Ser-3 the chain is Extracellular. The chain crosses the membrane as a helical span at residues Thr-4–Leu-24. The Cytoplasmic portion of the chain corresponds to Lys-25–Asp-195. The GP-PDE domain maps to Ser-40–Leu-309. Residues Glu-72, Asp-74, and His-87 each coordinate a divalent metal cation. The chain crosses the membrane as a helical span at residues Ile-196–Leu-216. The Extracellular segment spans residues Leu-217–Ala-314.

Belongs to the glycerophosphoryl diester phosphodiesterase family. As to expression, widely expressed with high expression level in testis.

It localises to the cytoplasm. Its subcellular location is the membrane. The protein localises to the perinuclear region. It is found in the endoplasmic reticulum. It carries out the reaction a 1-O-alkyl-sn-glycero-3-phosphocholine + H2O = a 1-O-alkyl-sn-glycero-3-phosphate + choline + H(+). The catalysed reaction is 1-hexadecanoyl-sn-glycero-3-phosphocholine + H2O = 1-hexadecanoyl-sn-glycero-3-phosphate + choline + H(+). The enzyme catalyses N-hexadecanoyl-sn-glycero-3-phosphoethanolamine + H2O = N-hexadecanoylethanolamine + sn-glycerol 3-phosphate + H(+). It catalyses the reaction N-(5Z,8Z,11Z,14Z-eicosatetraenoyl)-1-(9Z-octadecenoyl)-sn-glycero-3-phosphoethanolamine + H2O = N-(5Z,8Z,11Z,14Z-eicosatetraenoyl)-ethanolamine + 1-(9Z-octadecenoyl)-sn-glycero-3-phosphate + H(+). It carries out the reaction N,1-di-(9Z-octadecenoyl)-sn-glycero-3-phosphoethanolamine + H2O = N-(9Z-octadecenoyl) ethanolamine + 1-(9Z-octadecenoyl)-sn-glycero-3-phosphate + H(+). The catalysed reaction is N-hexadecanoyl-1-(9Z-octadecenoyl)-sn-glycero-3-phosphoethanolamine + H2O = N-hexadecanoylethanolamine + 1-(9Z-octadecenoyl)-sn-glycero-3-phosphate + H(+). The enzyme catalyses 1-O-(1Z-octadecenyl)-sn-glycero-3-phospho-N-hexadecanoyl-ethanolamine + H2O = 1-O-(1Z-octadecenyl)-sn-glycero-3-phosphate + N-hexadecanoylethanolamine + H(+). It catalyses the reaction 1-hexadecanoyl-sn-glycero-3-phosphoethanolamine + H2O = 1-hexadecanoyl-sn-glycero-3-phosphate + ethanolamine + H(+). It carries out the reaction 1-O-hexadecyl-sn-glycero-3-phosphocholine + H2O = 1-O-hexadecyl-sn-glycero-3-phosphate + choline + H(+). The catalysed reaction is 1-(9Z-octadecenoyl)-sn-glycero-3-phosphocholine + H2O = 1-(9Z-octadecenoyl)-sn-glycero-3-phosphate + choline + H(+). The enzyme catalyses N,1-dihexadecanoyl-sn-glycero-3-phosphoethanolamine + H2O = N-hexadecanoylethanolamine + 1-hexadecanoyl-sn-glycero-3-phosphate + H(+). It catalyses the reaction 1-O-(1Z-octadecenyl)-sn-glycero-3-phospho-(N-5Z,8Z,11Z,14Z-eicosatetraenoyl)-ethanolamine + H2O = 1-O-(1Z-octadecenyl)-sn-glycero-3-phosphate + N-(5Z,8Z,11Z,14Z-eicosatetraenoyl)-ethanolamine + H(+). It carries out the reaction 1-O-(1Z-octadecenyl)-sn-glycero-3-phospho-(N-9Z-octadecenoyl)-ethanolamine + H2O = 1-O-(1Z-octadecenyl)-sn-glycero-3-phosphate + N-(9Z-octadecenoyl) ethanolamine + H(+). Its activity is regulated as follows. Lysophospholipase D activity is increased by magnesium and manganese and inhibited by calcium in a concentration dependent manner. Loss of lysophospholipase D activity by addition of EDTA. Its function is as follows. Hydrolyzes lysoglycerophospholipids to produce lysophosphatidic acid (LPA) and the corresponding amines. Shows a preference for 1-O-alkyl-sn-glycero-3-phosphocholine (lyso-PAF), lysophosphatidylethanolamine (lyso-PE) and lysophosphatidylcholine (lyso-PC). May be involved in bioactive N-acylethanolamine biosynthesis from both N-acyl-lysoplasmenylethanolamin (N-acyl-lysoPlsEt) and N-acyl-lysophosphatidylethanolamin (N-acyl-lysoPE). In addition, hydrolyzes glycerophospho-N-acylethanolamine to N-acylethanolamine. Does not display glycerophosphodiester phosphodiesterase activity, since it cannot hydrolyze either glycerophosphoinositol or glycerophosphocholine. The sequence is that of Lysophospholipase D GDPD1 from Homo sapiens (Human).